Here is a 313-residue protein sequence, read N- to C-terminus: Formimidoylglutamase (313 aa).

Mn(2+) is bound by residues H130, D155, H157, D159, D241, and D243.

This sequence belongs to the arginase family. The cofactor is Mn(2+).

It catalyses the reaction N-formimidoyl-L-glutamate + H2O = formamide + L-glutamate. It participates in amino-acid degradation; L-histidine degradation into L-glutamate; L-glutamate from N-formimidoyl-L-glutamate (hydrolase route): step 1/1. In terms of biological role, catalyzes the conversion of N-formimidoyl-L-glutamate to L-glutamate and formamide. The protein is Formimidoylglutamase of Salmonella enteritidis PT4 (strain P125109).